A 415-amino-acid chain; its full sequence is 4-hydroxy-3-methylbut-2-enyl diphosphate reductase (415 aa).

C66 is a [4Fe-4S] cluster binding site. A (2E)-4-hydroxy-3-methylbut-2-enyl diphosphate-binding site is contributed by H96. Residue H96 participates in dimethylallyl diphosphate binding. H96 serves as a coordination point for isopentenyl diphosphate. C158 lines the [4Fe-4S] cluster pocket. (2E)-4-hydroxy-3-methylbut-2-enyl diphosphate is bound at residue H186. H186 provides a ligand contact to dimethylallyl diphosphate. Isopentenyl diphosphate is bound at residue H186. Catalysis depends on E188, which acts as the Proton donor. Residue T259 coordinates (2E)-4-hydroxy-3-methylbut-2-enyl diphosphate. C297 is a [4Fe-4S] cluster binding site. (2E)-4-hydroxy-3-methylbut-2-enyl diphosphate is bound by residues S326, S327, N328, and S388. Positions 326, 327, 328, and 388 each coordinate dimethylallyl diphosphate. The isopentenyl diphosphate site is built by S326, S327, N328, and S388.

Belongs to the IspH family. It depends on [4Fe-4S] cluster as a cofactor.

It carries out the reaction isopentenyl diphosphate + 2 oxidized [2Fe-2S]-[ferredoxin] + H2O = (2E)-4-hydroxy-3-methylbut-2-enyl diphosphate + 2 reduced [2Fe-2S]-[ferredoxin] + 2 H(+). The enzyme catalyses dimethylallyl diphosphate + 2 oxidized [2Fe-2S]-[ferredoxin] + H2O = (2E)-4-hydroxy-3-methylbut-2-enyl diphosphate + 2 reduced [2Fe-2S]-[ferredoxin] + 2 H(+). Its pathway is isoprenoid biosynthesis; dimethylallyl diphosphate biosynthesis; dimethylallyl diphosphate from (2E)-4-hydroxy-3-methylbutenyl diphosphate: step 1/1. The protein operates within isoprenoid biosynthesis; isopentenyl diphosphate biosynthesis via DXP pathway; isopentenyl diphosphate from 1-deoxy-D-xylulose 5-phosphate: step 6/6. Catalyzes the conversion of 1-hydroxy-2-methyl-2-(E)-butenyl 4-diphosphate (HMBPP) into a mixture of isopentenyl diphosphate (IPP) and dimethylallyl diphosphate (DMAPP). Acts in the terminal step of the DOXP/MEP pathway for isoprenoid precursor biosynthesis. The sequence is that of 4-hydroxy-3-methylbut-2-enyl diphosphate reductase from Acaryochloris marina (strain MBIC 11017).